Consider the following 353-residue polypeptide: Methionine import ATP-binding protein MetN (353 aa).

The region spanning 8–249 (LDQIDVTFHQ…PKQPLTQDFI (242 aa)) is the ABC transporter domain. Position 42–49 (42–49 (GYSGAGKS)) interacts with ATP.

It belongs to the ABC transporter superfamily. Methionine importer (TC 3.A.1.24) family. The complex is composed of two ATP-binding proteins (MetN), two transmembrane proteins (MetI) and a solute-binding protein (MetQ).

The protein localises to the cell membrane. The catalysed reaction is L-methionine(out) + ATP + H2O = L-methionine(in) + ADP + phosphate + H(+). The enzyme catalyses D-methionine(out) + ATP + H2O = D-methionine(in) + ADP + phosphate + H(+). Its function is as follows. Part of the ABC transporter complex MetNIQ involved in methionine import. Responsible for energy coupling to the transport system. The polypeptide is Methionine import ATP-binding protein MetN (Streptococcus pneumoniae (strain ATCC BAA-255 / R6)).